A 481-amino-acid chain; its full sequence is Glutamate--glyoxylate aminotransferase 2 (481 aa).

K291 is subject to N6-(pyridoxal phosphate)lysine. Residues 479-481 (SRM) carry the Peroxisomal targeting signal motif.

This sequence belongs to the class-I pyridoxal-phosphate-dependent aminotransferase family. Alanine aminotransferase subfamily. In terms of assembly, homodimer. Pyridoxal 5'-phosphate serves as cofactor. The N-terminus is blocked. In terms of tissue distribution, expressed at low levels in seedlings, leaves, flowers, roots, and green siliques.

Its subcellular location is the peroxisome. It catalyses the reaction L-alanine + 2-oxoglutarate = pyruvate + L-glutamate. It carries out the reaction glyoxylate + L-alanine = glycine + pyruvate. The enzyme catalyses glycine + 2-oxoglutarate = glyoxylate + L-glutamate. It participates in photosynthesis; C4 acid pathway. Its pathway is amino-acid degradation; L-alanine degradation via transaminase pathway; pyruvate from L-alanine: step 1/1. Its function is as follows. Catalyzes the Glu:glyoxylate aminotransferase (GGT), Ala:glyoxylate aminotransferase (AGT), Ala:2-oxoglutarate aminotransferase (AKT) and Glu:pyruvate aminotransferase (GPT) reactions in peroxisomes. This is Glutamate--glyoxylate aminotransferase 2 (GGAT2) from Arabidopsis thaliana (Mouse-ear cress).